A 713-amino-acid polypeptide reads, in one-letter code: NAD(+) hydrolase SARM1 (713 aa).

Residues 53–96 (DVQAVLDGSLPALRSAIRTLRSSKDTGDLEETRRAIAETFQLVE) form an ARM 1 repeat. Residues tryptophan 99, arginine 106, 145–153 (EQILVSENR), and 186–189 (HMFK) contribute to the NAD(+) site. ARM repeat units follow at residues 110–149 (EEIC…QILV), 151–189 (ENRD…HMFK), 192–231 (EETS…NCAM), 233–276 (GGHR…LAAN), 277–310 (REME…NMLD), 311–350 (SADS…VETS), and 355–398 (QRNT…EEVP). SAM domains follow at residues 408–472 (WKSG…LKTY) and 478–537 (CDPN…ILSA). The TIR domain occupies 552–695 (KGPDVFISYR…KILRFLEGCP (144 aa)). Residues 561-562 (RR) and glutamate 591 contribute to the NAD(+) site. Residue glutamate 634 is part of the active site.

The protein belongs to the SARM1 family. In terms of assembly, homooctamer; forms an octameric ring via SAM domains.

It localises to the cytoplasm. Its subcellular location is the cell projection. The protein resides in the axon. It is found in the dendrite. The protein localises to the synapse. It localises to the mitochondrion. The enzyme catalyses NAD(+) + H2O = ADP-D-ribose + nicotinamide + H(+). The catalysed reaction is NAD(+) = cyclic ADP-beta-D-ribose + nicotinamide + H(+). It catalyses the reaction NADP(+) + H2O = ADP-D-ribose 2'-phosphate + nicotinamide + H(+). Its activity is regulated as follows. Autoinhibited: in the inactive state, the enzymatic TIR domain is held apart by the autoinhibiting ARM repeats. NAD(+)-binding to ARM repeats maintains an inactive state by promoting interaction between ARM repeats and the TIR domain, thereby facilitating inhibition of the enzymatic TIR domain. Following activation, possibly by nicotinamide mononucleotide (NMN), auto-inhibitory interactions are released, allowing self-association of the TIR domains and subsequent activation of the NAD(+) hydrolase (NADase) activity. Self-association of TIR domains is facilitated by the octamer of SAM domains. Its function is as follows. NAD(+) hydrolase, which plays a key role in axonal degeneration following injury by regulating NAD(+) metabolism. Acts as a negative regulator of MYD88- and TRIF-dependent toll-like receptor signaling pathway by promoting Wallerian degeneration, an injury-induced form of programmed subcellular death which involves degeneration of an axon distal to the injury site. Wallerian degeneration is triggerred by NAD(+) depletion: in response to injury, SARM1 is activated and catalyzes cleavage of NAD(+) into ADP-D-ribose (ADPR), cyclic ADPR (cADPR) and nicotinamide; NAD(+) cleavage promoting cytoskeletal degradation and axon destruction. Also able to hydrolyze NADP(+), but not other NAD(+)-related molecules. Can activate neuronal cell death in response to stress. The sequence is that of NAD(+) hydrolase SARM1 from Danio rerio (Zebrafish).